A 306-amino-acid chain; its full sequence is Pantothenate kinase (306 aa).

91-98 (GSVAVGKS) is an ATP binding site.

The protein belongs to the prokaryotic pantothenate kinase family.

Its subcellular location is the cytoplasm. The enzyme catalyses (R)-pantothenate + ATP = (R)-4'-phosphopantothenate + ADP + H(+). It functions in the pathway cofactor biosynthesis; coenzyme A biosynthesis; CoA from (R)-pantothenate: step 1/5. The sequence is that of Pantothenate kinase from Streptococcus pneumoniae (strain 70585).